Reading from the N-terminus, the 251-residue chain is ATP synthase subunit a (251 aa).

The next 5 helical transmembrane spans lie at 28 to 48 (TDTVLSTAIAAAIVIALAFFL), 84 to 104 (IAPFVLPLAVTIFVFILISNW), 130 to 150 (INYVLALAFFVFVCYHLAGIW), 192 to 212 (IFAGGILVTLIALFPPYIMWA), and 220 to 240 (FDLFVGAIQAFIFSILTILYF).

It belongs to the ATPase A chain family. F-type ATPases have 2 components, CF(1) - the catalytic core - and CF(0) - the membrane proton channel. CF(1) has five subunits: alpha(3), beta(3), gamma(1), delta(1), epsilon(1). CF(0) has three main subunits: a(1), b(2) and c(9-12). The alpha and beta chains form an alternating ring which encloses part of the gamma chain. CF(1) is attached to CF(0) by a central stalk formed by the gamma and epsilon chains, while a peripheral stalk is formed by the delta and b chains.

The protein localises to the cell membrane. Its function is as follows. Key component of the proton channel; it plays a direct role in the translocation of protons across the membrane. The chain is ATP synthase subunit a from Mycobacterium leprae (strain TN).